The sequence spans 240 residues: MSVNLASQLREGTKKSHSMAENVGFVKCFLKGVVEKNSYRKLVGNLYFVYSAMEEEMAKFKDHPILSHIYFPELNRKQSLEQDLQFYYGSNWRQEVKISAAGQAYVDRVRQVAATAPELLVAHSYTRYLGDLSGGQILKKIAQNAMNLHDGGTAFYEFADIDDEKAFKNTYRQAMNDLPIDQATAERIVDEANDAFAMNMKMFNELEGNLIKAIGIMVFNSLTRRRSQGSTEVGLATSEG.

Heme b contacts are provided by Arg10, His17, Tyr125, Lys168, and Arg172.

The protein belongs to the heme oxygenase family.

The catalysed reaction is heme b + 3 reduced [NADPH--hemoprotein reductase] + 3 O2 = biliverdin IXalpha + CO + Fe(2+) + 3 oxidized [NADPH--hemoprotein reductase] + 3 H2O + H(+). Its function is as follows. Catalyzes the opening of the heme ring with the release of iron. Key enzyme in the synthesis of the chromophoric part of the photosynthetic antennae. In Synechocystis sp. (strain ATCC 27184 / PCC 6803 / Kazusa), this protein is Heme oxygenase 1 (pbsA1).